The chain runs to 369 residues: Cytochrome P450 monooxygenase apf8 (369 aa).

A heme-binding site is contributed by Cys-303.

Belongs to the cytochrome P450 family. Requires heme as cofactor.

It participates in secondary metabolite biosynthesis. Functionally, cytochrome P450 monooxygenase; part of the gene cluster that mediates the biosynthesis of the cyclic tetrapeptide apicidin F (APF). The non-ribosomal peptide synthetase apf1 incorporates four different amino acids to produce apicidin F: L-phenylalanine, D-pipecolic acid (D-pip), N-methoxy-L-tryptophan and L-2-aminooctanedioic acid. L-Phenylalanine is the only proteinogenic amino acid directly used by apf1. The 3 other apf1 substrates are non-proteinogenic and have to be modified by other enzymes of the cluster. Lysine is converted to delta-1-pyrroline-5-carboxylate (P5C) which is reduced to L-pipecolic acid (L-pip) by apf3. L-pip is epimerized to D-pip, probably by apf1 activity, prior to incorporation. L-Tryptophan is N-oxidyzed by one of the cytochrome P450 monooxygenases (apf7 or apf8), and further methylated at the hydroxy group by the O-methyltransferase apf6 to yield N-methoxy-L-tryptophan. The synthesis of the fourth apf1 substrate is more complex. The fatty acid synthase apf5 is involved in the synthesis of the octanoic acid backbone of L-2-aminooctanedioic acid by fixing one acetyl-CoA unit and three malonyl-CoA units. Then one of the cytochrome P450 monooxygenases (apf7 or apf8) may oxidize this backbone to 2-oxooctanoic acid. The aminotransferase apf4 is predicted to catalyze the exchange of the keto group with an amino group. The next step would be the oxidation of 2-aminooctanoic acid by one of the cytochrome P450 monooxygenases (apf7 or apf8). The last step is the oxidation of 2-amino-8-hydroxyoctanoic acid to 2-aminooctanedioic acid is catalyzed by the FAD-dependent monooxygenase apf9. This Gibberella fujikuroi (strain CBS 195.34 / IMI 58289 / NRRL A-6831) (Bakanae and foot rot disease fungus) protein is Cytochrome P450 monooxygenase apf8.